The following is a 221-amino-acid chain: Epididymal secretory glutathione peroxidase (221 aa).

The first 21 residues, 1-21 (MAIQLRVFYLVPLLLASYVQT), serve as a signal peptide directing secretion. Cys-73 is a catalytic residue.

The protein belongs to the glutathione peroxidase family. As to expression, epididymis.

The protein resides in the secreted. The enzyme catalyses 2 glutathione + H2O2 = glutathione disulfide + 2 H2O. In terms of biological role, protects cells and enzymes from oxidative damage, by catalyzing the reduction of hydrogen peroxide, lipid peroxides and organic hydroperoxide, by glutathione. May constitute a glutathione peroxidase-like protective system against peroxide damage in sperm membrane lipids. The polypeptide is Epididymal secretory glutathione peroxidase (Gpx5) (Rattus norvegicus (Rat)).